A 501-amino-acid polypeptide reads, in one-letter code: Sucrose transport protein SUT2 (501 aa).

The Cytoplasmic segment spans residues 1–31 (MPRRPSGGGGGAGPAAAAVRKVPLRKLLRAA). Residues 32–52 (SVACGVQFGWALQLSLLTPYV) traverse the membrane as a helical segment. Topologically, residues 53–55 (QEL) are extracellular. A helical transmembrane segment spans residues 56–76 (GIPHAFASLVWLCGPLSGLLV). Residues 77–98 (QPLVGHLSDRIAPAASPLGRRR) are Cytoplasmic-facing. A helical membrane pass occupies residues 99–119 (PFIAAGAASIAAAVLTVGFSA). Residues 120–135 (DLGRIFGDSITPGSTR) lie on the Extracellular side of the membrane. Residues 136 to 156 (LGAIIVYLVGFWLLDVGNNAT) form a helical membrane-spanning segment. The Cytoplasmic segment spans residues 157-176 (QGPCRAFLADLTENDPRRTR). A helical membrane pass occupies residues 177–197 (IANAYFSLFMALGNILGYATG). Over 198 to 222 (AYSGWYKIFPFTVTPSCSISCANLK) the chain is Extracellular. The helical transmembrane segment at 223 to 243 (SAFLLDIIILVVTTCITVASV) threads the bilayer. Topologically, residues 244–278 (QEPQSLGSDEADHPSTEQEAFLWELFGSFRYFTLP) are cytoplasmic. A helical transmembrane segment spans residues 279 to 299 (VWMVLIVTALTWIGWFPFILF). Over 300–327 (DTDWMGREIYRGSPDDPSITQSYHDGVR) the chain is Extracellular. The helical transmembrane segment at 328-348 (MGSFGLMLNSVLLGFTSIVLE) threads the bilayer. The Cytoplasmic portion of the chain corresponds to 349-356 (KLCRKWGA). Residues 357 to 377 (GLVWGVSNILMALCFVAMLVI) traverse the membrane as a helical segment. Topologically, residues 378-394 (TYVAKNMDYPPSGVPPT) are extracellular. Residues 395-415 (GIVIASLVVFTILGAPLAITY) traverse the membrane as a helical segment. The Cytoplasmic segment spans residues 416–433 (SIPYAMAASRVENLGLGQ). Residues 434–454 (GLAMGILNLAIVIPQVIVSLG) traverse the membrane as a helical segment. Residues 455-467 (SGPWDQLFGGGNA) lie on the Extracellular side of the membrane. A helical membrane pass occupies residues 468-488 (PAFAVAAAASFIGGLVAILGL). Topologically, residues 489 to 501 (PRARIASRRRGHR) are cytoplasmic.

The protein belongs to the glycoside-pentoside-hexuronide (GPH) cation symporter transporter (TC 2.A.2.4) family. As to quaternary structure, homodimer. Expressed in source leaf blades.

It is found in the cell membrane. It functions in the pathway glycan biosynthesis; sucrose metabolism. Its function is as follows. Responsible for the transport of sucrose into the cell, with the concomitant uptake of protons (symport system). May also transport other glucosides. The polypeptide is Sucrose transport protein SUT2 (SUT2) (Oryza sativa subsp. indica (Rice)).